We begin with the raw amino-acid sequence, 244 residues long: tRNA uridine(34) hydroxylase (244 aa).

One can recognise a Rhodanese domain in the interval Gln-129 to Asp-219. Cys-183 functions as the Cysteine persulfide intermediate in the catalytic mechanism.

It belongs to the TrhO family.

It carries out the reaction uridine(34) in tRNA + AH2 + O2 = 5-hydroxyuridine(34) in tRNA + A + H2O. Catalyzes oxygen-dependent 5-hydroxyuridine (ho5U) modification at position 34 in tRNAs. This is tRNA uridine(34) hydroxylase from Bordetella bronchiseptica (strain ATCC BAA-588 / NCTC 13252 / RB50) (Alcaligenes bronchisepticus).